Reading from the N-terminus, the 334-residue chain is MTTVYYDQDVKTDALQGKKIAVVGYGSQGHAHAQNLKDNGYDVVIGIRPGRSFDKAKEDGFDVFPVAEAVKQADVIMVLLPDEIQGDVYKNEIEPNLEKHNALAFAHGFNIHFGVIQPPADVDVFLVAPKGPGHLVRRTFVEGSAVPSLFGIQQGASGQARNIALSYAKGIGATRAGVIETTFKEETETDLFGEQAVLCGGVSKLIQSGFETLVEAGYQPELAYFEVLHEMKLIVDLMYEGGMENVRYSISNTAEFGDYVSGPRVITPDVKENMKAVLTDIQNGNFSNRFIEDNKNGFKEFYKLREEQHGHQIEKVGRELREMMPFIKSKSIEK.

Positions 1–181 (MTTVYYDQDV…GATRAGVIET (181 aa)) constitute a KARI N-terminal Rossmann domain. NADP(+)-binding positions include 25–28 (YGSQ), arginine 48, serine 52, and 82–85 (DEIQ). Residue histidine 107 is part of the active site. Glycine 133 contacts NADP(+). The 146-residue stretch at 182–327 (TFKEETETDL…RELREMMPFI (146 aa)) folds into the KARI C-terminal knotted domain. 4 residues coordinate Mg(2+): aspartate 190, glutamate 194, glutamate 226, and glutamate 230. A substrate-binding site is contributed by serine 251.

This sequence belongs to the ketol-acid reductoisomerase family. The cofactor is Mg(2+).

The enzyme catalyses (2R)-2,3-dihydroxy-3-methylbutanoate + NADP(+) = (2S)-2-acetolactate + NADPH + H(+). It carries out the reaction (2R,3R)-2,3-dihydroxy-3-methylpentanoate + NADP(+) = (S)-2-ethyl-2-hydroxy-3-oxobutanoate + NADPH + H(+). It functions in the pathway amino-acid biosynthesis; L-isoleucine biosynthesis; L-isoleucine from 2-oxobutanoate: step 2/4. It participates in amino-acid biosynthesis; L-valine biosynthesis; L-valine from pyruvate: step 2/4. Functionally, involved in the biosynthesis of branched-chain amino acids (BCAA). Catalyzes an alkyl-migration followed by a ketol-acid reduction of (S)-2-acetolactate (S2AL) to yield (R)-2,3-dihydroxy-isovalerate. In the isomerase reaction, S2AL is rearranged via a Mg-dependent methyl migration to produce 3-hydroxy-3-methyl-2-ketobutyrate (HMKB). In the reductase reaction, this 2-ketoacid undergoes a metal-dependent reduction by NADPH to yield (R)-2,3-dihydroxy-isovalerate. The protein is Ketol-acid reductoisomerase (NADP(+)) of Staphylococcus aureus (strain USA300).